The primary structure comprises 151 residues: Receptor activity-modifying protein 3 (151 aa).

A signal peptide spans 1 to 30; it reads MEATAPRRRHLLPLLLLLLLLCGECPPVSG. Over 31–116 the chain is Extracellular; sequence CNEKRMLAML…CSVDRQQWQD (86 aa). Cystine bridges form between Cys43/Cys75 and Cys60/Cys107. Residues Asn61 and Asn106 are each glycosylated (N-linked (GlcNAc...) asparagine). Residues 117–141 traverse the membrane as a helical segment; that stretch reads PPDEILIPLIVVPILLTLAMTGLVV. Residues 142–151 are Cytoplasmic-facing; that stretch reads WRSKRAAQVV.

It belongs to the RAMP family. In terms of assembly, heterodimer of CALCRL and RAMP3; interaction induces allosteric modulation of CALCRL function and ligand specificity for adrenomedullin/ADM and intermedin/ADM2. Heterodimer of CALCR and RAMP3; interaction form the receptor complex AMYR3 for amylin/IAPP. Interacts with GPER1.

Its subcellular location is the cell membrane. The protein localises to the membrane. Accessory protein that interacts with and modulates the function of G-protein coupled receptors including calcitonin gene-related peptide type 1 receptor (CALCRL), calcitonin receptor (CALCR) and G-protein coupled estrogen receptor 1 (GPER1). Required for the transport of CALCRL and GPER1 receptors to the plasma membrane. Plays a role in cardioprotection by reducing cardiac hypertrophy and perivascular fibrosis in a GPER1-dependent manner. Together with CALCRL, form a receptor complex for adrenomedullin/ADM and intermedin/ADM2. Together with CALCR, act as a receptor complex for amylin/IAPP. This chain is Receptor activity-modifying protein 3 (RAMP3), found in Sus scrofa (Pig).